Here is a 303-residue protein sequence, read N- to C-terminus: Probable porphobilinogen deaminase (303 aa).

Cys240 is modified (S-(dipyrrolylmethanemethyl)cysteine).

It belongs to the HMBS family. Dipyrromethane is required as a cofactor.

The enzyme catalyses 4 porphobilinogen + H2O = hydroxymethylbilane + 4 NH4(+). The protein operates within porphyrin-containing compound metabolism; protoporphyrin-IX biosynthesis; coproporphyrinogen-III from 5-aminolevulinate: step 2/4. Its function is as follows. Tetrapolymerization of the monopyrrole PBG into the hydroxymethylbilane pre-uroporphyrinogen in several discrete steps. This Hyperthermus butylicus (strain DSM 5456 / JCM 9403 / PLM1-5) protein is Probable porphobilinogen deaminase.